The primary structure comprises 130 residues: Small ribosomal subunit protein uS8 (130 aa).

The protein belongs to the universal ribosomal protein uS8 family. In terms of assembly, part of the 30S ribosomal subunit.

Functionally, one of the primary rRNA binding proteins, it binds directly to 16S rRNA central domain where it helps coordinate assembly of the platform of the 30S subunit. The chain is Small ribosomal subunit protein uS8 from Halorubrum lacusprofundi (strain ATCC 49239 / DSM 5036 / JCM 8891 / ACAM 34).